A 205-amino-acid polypeptide reads, in one-letter code: MPCSTEAMEKAGHGHASTPRKRSLSNSSFRLRSESLNTLRLRRIFDLFDKNSDGIITVDELSRALNLLGLETDLSELESTVKSFTREGNIGLQFEDFISLHQSLNDSYFAYGGEDEDDNEEDMRKSILSQEEADSFGGFKVFDEDGDGYISARELQMVLGKLGFSEGSEIDRVEKMIVSVDSNRDGRVDFFEFKDMMRSVLVRSS.

Residues 1 to 26 are disordered; the sequence is MPCSTEAMEKAGHGHASTPRKRSLSN. EF-hand domains follow at residues 36–71, 72–107, 130–165, and 168–203; these read LNTL…LGLE, TDLS…LNDS, QEEA…LGFS, and SEID…VLVR. Positions 49, 51, 53, and 60 each coordinate Ca(2+). The Ca(2+) site is built by Asp-143, Asp-145, Asp-147, Tyr-149, Glu-154, Asp-181, Asn-183, Asp-185, Arg-187, and Glu-192.

Could be involved in calcium metabolism in pollen. Binds 3 calcium ions. This is Calcium-binding allergen Bet v 3 (BETVIII) from Betula pendula (European white birch).